Here is a 246-residue protein sequence, read N- to C-terminus: Small ribosomal subunit protein uS2 (246 aa).

The segment at 225–246 (SKSSASVPNKDEYVAAEDGAAE) is disordered.

The protein belongs to the universal ribosomal protein uS2 family.

The polypeptide is Small ribosomal subunit protein uS2 (Cellvibrio japonicus (strain Ueda107) (Pseudomonas fluorescens subsp. cellulosa)).